The following is a 578-amino-acid chain: Putative fatty-acid--CoA ligase fadD21 (578 aa).

Belongs to the ATP-dependent AMP-binding enzyme family.

The sequence is that of Putative fatty-acid--CoA ligase fadD21 (fadD21) from Mycobacterium bovis (strain ATCC BAA-935 / AF2122/97).